Consider the following 199-residue polypeptide: MVNYPHNLIRQKVSSVQKQNKVDFANRGMSFEAAINATNDYYLSRQIAVIHKKPTPVQIVKVDYPKRSRAKIVEAYFRQASTTDYCGVYKGHYVDFEAKETRQKTAMPMKNFHLHQIEHMACVLHQKGICFVLLHFSTLKETYYLPAQALISFYQIDNGSKSMPIDYIRKNGFKVAFGAFPQVPYLNIIEQNFLGGDYN.

Mg(2+) is bound by residues Thr82, Asp84, Glu97, and Gln116.

This sequence belongs to the RecU family. It depends on Mg(2+) as a cofactor.

The protein localises to the cytoplasm. The catalysed reaction is Endonucleolytic cleavage at a junction such as a reciprocal single-stranded crossover between two homologous DNA duplexes (Holliday junction).. Its function is as follows. Endonuclease that resolves Holliday junction intermediates in genetic recombination. Cleaves mobile four-strand junctions by introducing symmetrical nicks in paired strands. Promotes annealing of linear ssDNA with homologous dsDNA. Required for DNA repair, homologous recombination and chromosome segregation. The sequence is that of Holliday junction resolvase RecU from Streptococcus pyogenes serotype M1.